Consider the following 87-residue polypeptide: uncharacterized protein (87 aa).

The protein to bacteriophage lambda exonuclease exo.

This is an uncharacterized protein from Escherichia coli (strain K12).